Consider the following 70-residue polypeptide: Envelope small membrane protein (70 aa).

Gly-2 carries the N-myristoyl glycine; by host lipid modification. Residues 2-15 (GSLWSKISQLFVDA) are endoplasmic reticulum retention signal. Topologically, residues 2 to 25 (GSLWSKISQLFVDAFTEFLVSVVD) are virion surface. A helical membrane pass occupies residues 26 to 46 (IVIFLAILFGFTVAGWLLVFL). Topologically, residues 47 to 70 (LRVVCSALLRSRSAIHSPELSKVL) are intravirion.

This sequence belongs to the arteriviridae E protein family. In terms of assembly, homooligomer. Associates with itself into higher-order structures, including dimers, trimers and tetramers. Associates with the GP2b-GP3-GP4 complex. Post-translationally, myristoylated. Not glycosylated.

The protein localises to the virion membrane. It is found in the host endoplasmic reticulum membrane. It localises to the host Golgi apparatus membrane. The protein resides in the secreted. Minor envelope protein. May function as a viroporin in the virion envelope that facilitates uncoating of the virus in order to release the genomic RNA into the cytoplasm for subsequent replication. This Sus scrofa (Pig) protein is Envelope small membrane protein (GP2b).